The sequence spans 175 residues: Peptide deformylase (175 aa).

Positions 96 and 138 each coordinate Fe cation. Residue Glu139 is part of the active site. His142 provides a ligand contact to Fe cation.

This sequence belongs to the polypeptide deformylase family. Fe(2+) serves as cofactor.

It catalyses the reaction N-terminal N-formyl-L-methionyl-[peptide] + H2O = N-terminal L-methionyl-[peptide] + formate. Removes the formyl group from the N-terminal Met of newly synthesized proteins. Requires at least a dipeptide for an efficient rate of reaction. N-terminal L-methionine is a prerequisite for activity but the enzyme has broad specificity at other positions. The polypeptide is Peptide deformylase (Rhodopseudomonas palustris (strain ATCC BAA-98 / CGA009)).